We begin with the raw amino-acid sequence, 199 residues long: Cytosine-containing mismatch-binding protein 1 (199 aa).

A DNA-binding region (HMG box) is located at residues 123-197 (PKKPSSAFIL…QYDKFMKEAG (75 aa)).

As to quaternary structure, monomer.

It is found in the nucleus. In terms of biological role, binds to cytosines in base mismatches and opposite chemically altered guanines. May be involved in repair of DNA damage. The sequence is that of Cytosine-containing mismatch-binding protein 1 from Schizosaccharomyces pombe (strain 972 / ATCC 24843) (Fission yeast).